We begin with the raw amino-acid sequence, 316 residues long: Lys-63-specific deubiquitinase BRCC36 (316 aa).

A2 carries the post-translational modification N-acetylalanine. An MPN domain is found at 12–179 (VHLESDAFLV…YTCFQSIQAQ (168 aa)). Residues H122, H124, and D135 each contribute to the Zn(2+) site. The short motif at 122–135 (HSHPHITVWPSHVD) is the JAMM motif element. At S258 the chain carries Phosphoserine.

This sequence belongs to the peptidase M67A family. BRCC36 subfamily. As to quaternary structure, component of the ARISC complex, at least composed of UIMC1/RAP80, ABRAXAS1, BRCC3/BRCC36, BABAM2 and BABAM1/NBA1. Component of the BRCA1-A complex, at least composed of BRCA1, BARD1, UIMC1/RAP80, ABRAXAS1, BRCC3/BRCC36, babam2 and BABAM1/NBA1. In the BRCA1-A complex, interacts directly with ABRAXAS1 and babam2. Component of the BRISC complex, at least composed of ABRAXAS2, BRCC3/BRCC36, BABAM2 and BABAM1/NBA1. Identified in a complex with SHMT2 and the other subunits of the BRISC complex. In the BRISC complex, interacts directly with ABRAXAS2. Identified in a complex with ABRAXAS2 and NUMA1. The BRISC complex interacts with the CSN complex. Component of the BRCA1/BRCA2 containing complex (BRCC), which also contains BRCA1, BRCA2, BARD1, BABAM2 and RAD51. BRCC is a ubiquitin E3 ligase complex that enhances cellular survival following DNA damage. Interacts with BRCA1. Binds polyubiquitin. Interacts with PWWP2B. Interacts with HDAC1; this interaction is enhanced in the presence of PWWP2B. Requires Zn(2+) as cofactor. In terms of tissue distribution, heart, brain, placenta, lung, liver, skeletal muscle, kidney and pancreas. Aberrantly expressed in the vast majority of breast tumors.

Its subcellular location is the nucleus. The protein localises to the cytoplasm. It is found in the cytoskeleton. The protein resides in the spindle pole. Functionally, metalloprotease that specifically cleaves 'Lys-63'-linked polyubiquitin chains. Does not have activity toward 'Lys-48'-linked polyubiquitin chains. Component of the BRCA1-A complex, a complex that specifically recognizes 'Lys-63'-linked ubiquitinated histones H2A and H2AX at DNA lesions sites, leading to target the BRCA1-BARD1 heterodimer to sites of DNA damage at double-strand breaks (DSBs). In the BRCA1-A complex, it specifically removes 'Lys-63'-linked ubiquitin on histones H2A and H2AX, antagonizing the RNF8-dependent ubiquitination at double-strand breaks (DSBs). Catalytic subunit of the BRISC complex, a multiprotein complex that specifically cleaves 'Lys-63'-linked ubiquitin in various substrates. Mediates the specific 'Lys-63'-specific deubiquitination associated with the COP9 signalosome complex (CSN), via the interaction of the BRISC complex with the CSN complex. The BRISC complex is required for normal mitotic spindle assembly and microtubule attachment to kinetochores via its role in deubiquitinating NUMA1. Plays a role in interferon signaling via its role in the deubiquitination of the interferon receptor IFNAR1; deubiquitination increases IFNAR1 activity by enhancing its stability and cell surface expression. Acts as a regulator of the NLRP3 inflammasome by mediating deubiquitination of NLRP3, leading to NLRP3 inflammasome assembly. Down-regulates the response to bacterial lipopolysaccharide (LPS) via its role in IFNAR1 deubiquitination. Deubiquitinates HDAC1 and PWWP2B leading to their stabilization. In Homo sapiens (Human), this protein is Lys-63-specific deubiquitinase BRCC36 (BRCC3).